Here is a 409-residue protein sequence, read N- to C-terminus: Cdc42 effector protein 1 (409 aa).

The disordered stretch occupies residues 1–29 (MPGPQGGTGAPTMSLGKLSPVGWVSSSHG). Phosphoserine occurs at positions 19 and 27. At Thr-34 the chain carries Phosphothreonine. In terms of domain architecture, CRIB spans 38–52 (ISPPLGDFRHTMHVG). The residue at position 39 (Ser-39) is a Phosphoserine. Arg-53 carries the post-translational modification Omega-N-methylarginine. Residues Ser-65, Ser-77, Ser-101, Ser-113, Ser-121, and Ser-139 each carry the phosphoserine modification. Residues 167–189 (PRVEKHSNRDRDRDPDHSQDREQ) are compositionally biased toward basic and acidic residues. A disordered region spans residues 167-203 (PRVEKHSNRDRDRDPDHSQDREQSSFPSEPTPNPELR). Phosphoserine is present on residues Ser-191, Ser-205, Ser-207, and Ser-210. A run of 3 repeats spans residues 235–241 (PAAETPV), 242–248 (PTANPPA), and 255–261 (PTAKPPA). The tract at residues 235 to 284 (PAAETPVPTANPPAPAANPAPTAKPPAHAITTLDAVTSLPASAVTSLPAP) is 3 X 7 AA tandem repeats of [PT]-[AT]-A-[ENT]-[PT]-[PTS]-[AG]. Disordered stretches follow at residues 237–260 (AETPVPTANPPAPAANPAPTAKPP) and 282–329 (PAPA…FDRH). A compositionally biased stretch (pro residues) spans 243–258 (TANPPAPAANPAPTAK). A compositionally biased stretch (low complexity) spans 282–291 (PAPAAASSPS). 4 positions are modified to phosphoserine: Ser-312, Ser-332, Ser-368, and Ser-371.

This sequence belongs to the BORG/CEP family. In terms of assembly, interacts with RHOQ and CDC42, in a GTP-dependent manner.

Its subcellular location is the endomembrane system. The protein localises to the cytoplasm. It is found in the cytoskeleton. Its function is as follows. Probably involved in the organization of the actin cytoskeleton. Induced membrane extensions in fibroblasts. The chain is Cdc42 effector protein 1 (Cdc42ep1) from Mus musculus (Mouse).